A 590-amino-acid polypeptide reads, in one-letter code: ATP-dependent zinc metalloprotease FtsH 1 (590 aa).

Over 1–8 the chain is Cytoplasmic; the sequence is MLKLTKKQ. The helical transmembrane segment at 9-29 threads the bilayer; the sequence is LIIVLGIAIVVVSAIGYAVYT. Residues 30–103 lie on the Extracellular side of the membrane; the sequence is QYFNEDKLEI…QVRETTDQYS (74 aa). Residues 104–124 form a helical membrane-spanning segment; that stretch reads VVQVITFVVLIGGFIGVAIFL. Residues 125 to 590 are Cytoplasmic-facing; it reads SKKNATQTSK…NEIFSGFQSM (466 aa). 195–202 contributes to the ATP binding site; the sequence is GSPGTGKT. Histidine 418 contributes to the Zn(2+) binding site. The active site involves glutamate 419. Zn(2+) contacts are provided by histidine 422 and aspartate 496.

It in the central section; belongs to the AAA ATPase family. In the C-terminal section; belongs to the peptidase M41 family. In terms of assembly, homohexamer. Zn(2+) serves as cofactor.

It is found in the cell membrane. Functionally, acts as a processive, ATP-dependent zinc metallopeptidase for both cytoplasmic and membrane proteins. Plays a role in the quality control of integral membrane proteins. This Alkaliphilus metalliredigens (strain QYMF) protein is ATP-dependent zinc metalloprotease FtsH 1.